Consider the following 418-residue polypeptide: Gamma-glutamyl phosphate reductase (418 aa).

The protein belongs to the gamma-glutamyl phosphate reductase family.

Its subcellular location is the cytoplasm. The enzyme catalyses L-glutamate 5-semialdehyde + phosphate + NADP(+) = L-glutamyl 5-phosphate + NADPH + H(+). The protein operates within amino-acid biosynthesis; L-proline biosynthesis; L-glutamate 5-semialdehyde from L-glutamate: step 2/2. Catalyzes the NADPH-dependent reduction of L-glutamate 5-phosphate into L-glutamate 5-semialdehyde and phosphate. The product spontaneously undergoes cyclization to form 1-pyrroline-5-carboxylate. The protein is Gamma-glutamyl phosphate reductase of Chlorobium chlorochromatii (strain CaD3).